A 576-amino-acid chain; its full sequence is Arginine--tRNA ligase (576 aa).

A 'HIGH' region motif is present at residues 126–136; it reads ANPTGPMHIGH.

Belongs to the class-I aminoacyl-tRNA synthetase family. Monomer.

It is found in the cytoplasm. It catalyses the reaction tRNA(Arg) + L-arginine + ATP = L-arginyl-tRNA(Arg) + AMP + diphosphate. The polypeptide is Arginine--tRNA ligase (Rickettsia peacockii (strain Rustic)).